The primary structure comprises 342 residues: MGCNSSSEAKQSDKIDRTLYDEKKSQEREIKLLLLGSGDSGKSTIAKQMRYIHTKGFSNEEIATFVEIMHSNVLSSIQILIRNVPVEQLGSDLKDKANYYSSINPYELPLTPDIGLEIDRLWKNEAIQKLFSTNRAELNLPEVTAYCLDQVERISSETYTPTQEDVLRCRQRTTGMKETQFNVEDIKFRLIDVGGQKNERRKWMHYFEDVKSIIFCVALGDYDMNLVEDETINRMEDSLKLWNDIVNNPFFKNTSFVLFLNKNDIFREKIKKIPLVDYFPDYQGGYNYEKGIEYIRNKFFSSVPTATTIVAHVTTATDTENITIVFDAVRRNIIQSILKLHY.

The N-myristoyl glycine moiety is linked to residue Gly2. Cys3 carries S-palmitoyl cysteine lipidation. Positions 28–342 constitute a G-alpha domain; the sequence is REIKLLLLGS…IIQSILKLHY (315 aa). A G1 motif region spans residues 31–44; sequence KLLLLGSGDSGKST. GTP contacts are provided by residues 36–43, 167–173, 192–196, 261–264, and Ala316; these read GSGDSGKS, LRCRQRT, DVGGQ, and NKND. The Mg(2+) site is built by Ser43 and Thr173. Residues 165-173 form a G2 motif region; that stretch reads DVLRCRQRT. Residues 188–197 are G3 motif; the sequence is FRLIDVGGQK. The G4 motif stretch occupies residues 257–264; sequence VLFLNKND. A G5 motif region spans residues 314–319; sequence TTATDT.

It belongs to the G-alpha family. In terms of assembly, g proteins are composed of 3 units; alpha, beta and gamma. The alpha chain contains the guanine nucleotide binding site.

Functionally, guanine nucleotide-binding proteins (G proteins) are involved as modulators or transducers in various transmembrane signaling systems. G alpha-9 antagonizes broad chemotactic response. It functions rapidly following receptor stimulation to negatively regulate PI3K/PTEN, adenylyl cyclase, and guanylyl cyclase pathways. The protein is Guanine nucleotide-binding protein alpha-9 subunit (gpaI) of Dictyostelium discoideum (Social amoeba).